The sequence spans 553 residues: 2-succinyl-5-enolpyruvyl-6-hydroxy-3-cyclohexene-1-carboxylate synthase (553 aa).

The protein belongs to the TPP enzyme family. MenD subfamily. In terms of assembly, homodimer. The cofactor is Mg(2+). Requires Mn(2+) as cofactor. Thiamine diphosphate serves as cofactor.

It carries out the reaction isochorismate + 2-oxoglutarate + H(+) = 5-enolpyruvoyl-6-hydroxy-2-succinyl-cyclohex-3-ene-1-carboxylate + CO2. The protein operates within quinol/quinone metabolism; 1,4-dihydroxy-2-naphthoate biosynthesis; 1,4-dihydroxy-2-naphthoate from chorismate: step 2/7. Its pathway is quinol/quinone metabolism; menaquinone biosynthesis. Catalyzes the thiamine diphosphate-dependent decarboxylation of 2-oxoglutarate and the subsequent addition of the resulting succinic semialdehyde-thiamine pyrophosphate anion to isochorismate to yield 2-succinyl-5-enolpyruvyl-6-hydroxy-3-cyclohexene-1-carboxylate (SEPHCHC). The sequence is that of 2-succinyl-5-enolpyruvyl-6-hydroxy-3-cyclohexene-1-carboxylate synthase from Thermobifida fusca (strain YX).